The primary structure comprises 504 residues: Maturase K (504 aa).

Belongs to the intron maturase 2 family. MatK subfamily.

It localises to the plastid. Its subcellular location is the chloroplast. Usually encoded in the trnK tRNA gene intron. Probably assists in splicing its own and other chloroplast group II introns. This Fagus crenata (Japanese beech) protein is Maturase K.